A 324-amino-acid polypeptide reads, in one-letter code: Phospho-N-acetylmuramoyl-pentapeptide-transferase (324 aa).

The next 10 membrane-spanning stretches (helical) occupy residues 5 to 25, 50 to 70, 77 to 97, 117 to 137, 147 to 167, 176 to 196, 203 to 223, 227 to 247, 250 to 270, and 302 to 322; these read VILF…PILI, GTPT…TIVM, ISPE…LGFL, LIGQ…YNFA, LSFD…VGGS, LDGL…ILAW, VAIF…FNAH, VFMG…IAIL, LEIL…SVIL, and VVVT…YIEV.

The protein belongs to the glycosyltransferase 4 family. MraY subfamily. It depends on Mg(2+) as a cofactor.

It localises to the cell membrane. The catalysed reaction is UDP-N-acetyl-alpha-D-muramoyl-L-alanyl-gamma-D-glutamyl-meso-2,6-diaminopimeloyl-D-alanyl-D-alanine + di-trans,octa-cis-undecaprenyl phosphate = di-trans,octa-cis-undecaprenyl diphospho-N-acetyl-alpha-D-muramoyl-L-alanyl-D-glutamyl-meso-2,6-diaminopimeloyl-D-alanyl-D-alanine + UMP. The protein operates within cell wall biogenesis; peptidoglycan biosynthesis. Catalyzes the initial step of the lipid cycle reactions in the biosynthesis of the cell wall peptidoglycan: transfers peptidoglycan precursor phospho-MurNAc-pentapeptide from UDP-MurNAc-pentapeptide onto the lipid carrier undecaprenyl phosphate, yielding undecaprenyl-pyrophosphoryl-MurNAc-pentapeptide, known as lipid I. The protein is Phospho-N-acetylmuramoyl-pentapeptide-transferase of Bacillus subtilis (strain 168).